The following is a 2371-amino-acid chain: Highly reducing polyketide synthase ntnH (2371 aa).

Positions 10–429 (PSPIAIVGIG…GANAHVILEG (420 aa)) constitute a Ketosynthase family 3 (KS3) domain. Active-site for beta-ketoacyl synthase activity residues include cysteine 180, histidine 316, and histidine 352. The segment at 528–796 (FIFTGQGAQW…NSCLSRGADA (269 aa)) is malonyl-CoA:ACP transacylase (MAT) domain. The tract at residues 858-986 (HELLGARVIG…GKVHPGNAST (129 aa)) is N-terminal hotdog fold. The segment at 858-1142 (HELLGARVIG…GIRFRILENN (285 aa)) is dehydratase (DH) domain. The PKS/mFAS DH domain occupies 858–1145 (HELLGARVIG…FRILENNRSK (288 aa)). The active-site Proton acceptor; for dehydratase activity is histidine 890. Residues 1001 to 1145 (VRGVISAKWY…FRILENNRSK (145 aa)) are C-terminal hotdog fold. Aspartate 1059 serves as the catalytic Proton donor; for dehydratase activity. Residues 1309 to 1456 (FFQLLGHNKK…FENVTAIMDQ (148 aa)) form a methyltransferase (CMet) domain region. Positions 1669-1968 (GLLSSLQWQG…GHRPIGAICI (300 aa)) are enoyl reductase (ER) (ER) domain. Residues 1993–2167 (SYVLIGGLGG…ASVIDLGVME (175 aa)) form a ketoreductase (KR) domain region. Residues 2280 to 2362 (EDETAVAEFL…DLGKLARSRI (83 aa)) enclose the Carrier domain. Serine 2322 bears the O-(pantetheine 4'-phosphoryl)serine mark.

The protein operates within secondary metabolite biosynthesis; terpenoid biosynthesis. Functionally, highly reducing polyketide synthase; part of the gene cluster that mediates the biosynthesis of the meroterpenoids nectripenoids A and B, as well as cochliquninone D and isocochliquninone E. The pathway probably begins with the HR-PKS ntnH that catalyzes two chain-extension steps to form a reduced triketide, which then primes the SAT domain in the NR-PKS ntnG to initiate three more cycles of extension to give a linear hexaketide corresponding to the polyketide part of nectripenoids. The FAD-dependent monooxygenase ntnJ then performs an oxidative decarboxylation at C11 of the ntnH/ntnG product, via an electrophilic aromatic hydroxylation with concomitant ipso-decarboxylation. The membrane-bound polyprenyl transferase ntnF then introduces a farnesyl group before the FAD-dependent monooxygenase ntnK functions as the first epoxidase on terminal C12'-C13' olefin, followed by a second epoxidation on C7'-C8' catalyzed by ntnA. The terpene cyclase/mutase ntnI then initiates the sequential tricyclic ring formation through protonation of the terminal epoxide and catalyzes the regioselective and stereoselective 6/6/6-tricyclic ring formation. The cytochrome P450 monooxygenase ntnM may then hydroxylate C1'. The sequence is that of Highly reducing polyketide synthase ntnH from Nectria sp.